We begin with the raw amino-acid sequence, 444 residues long: Methylenetetrahydrofolate--tRNA-(uracil-5-)-methyltransferase TrmFO (444 aa).

FAD is bound at residue 11-16 (GGGLAG).

It belongs to the MnmG family. TrmFO subfamily. It depends on FAD as a cofactor.

Its subcellular location is the cytoplasm. It carries out the reaction uridine(54) in tRNA + (6R)-5,10-methylene-5,6,7,8-tetrahydrofolate + NADH + H(+) = 5-methyluridine(54) in tRNA + (6S)-5,6,7,8-tetrahydrofolate + NAD(+). The enzyme catalyses uridine(54) in tRNA + (6R)-5,10-methylene-5,6,7,8-tetrahydrofolate + NADPH + H(+) = 5-methyluridine(54) in tRNA + (6S)-5,6,7,8-tetrahydrofolate + NADP(+). Its function is as follows. Catalyzes the folate-dependent formation of 5-methyl-uridine at position 54 (M-5-U54) in all tRNAs. The chain is Methylenetetrahydrofolate--tRNA-(uracil-5-)-methyltransferase TrmFO from Desulfotalea psychrophila (strain LSv54 / DSM 12343).